A 270-amino-acid polypeptide reads, in one-letter code: Maximins-S type D (270 aa).

Residues 1 to 18 (MNFNYFILVLFFITSGHA) form the signal peptide. Propeptides lie at residues 19–35 (KSETREVHQEAENHIKR) and 52–65 (SAEEQNLAEHLVTR). Asn83 carries the post-translational modification Asparagine amide. The propeptide occupies 87 to 100 (SAEEQDLAEDLVTR). Lys118 carries the post-translational modification Lysine amide. Residues 122–135 (SAEDQDLAEDLVTR) constitute a propeptide that is removed on maturation. The residue at position 153 (Asn153) is an Asparagine amide. The propeptide occupies 157–170 (SAEEQDLAEHLVTR). Residue Asn188 is modified to Asparagine amide. Positions 192-205 (SAEEQDLVEDLVTR) are excised as a propeptide. Residue Lys223 is modified to Lysine amide. The propeptide occupies 227–240 (SAEEQDLAEDLVTR). Lys258 carries the lysine amide modification. Residues 262–270 (SAEQEKDMK) constitute a propeptide that is removed on maturation.

The protein belongs to the maximin-S family. As to expression, expressed by the skin dorsal glands.

The protein localises to the secreted. In terms of biological role, maximin-S1 has no antimicrobial activity. Has no hemolytic activity. Its function is as follows. Maximin-S2 has an activity against mycoplasma but has no activity against common Gram-positive and Gram-negative bacteria nor fungi. Has no hemolytic activity. Functionally, maximin-S3 has an activity against mycoplasma but has no activity against common Gram-positive and Gram-negative bacteria nor fungi. Has no hemolytic activity. Maximin-S4 has an activity against mycoplasma but has no activity against common Gram-positive and Gram-negative bacteria nor fungi. Has no hemolytic activity. In terms of biological role, maximin-S5 has an activity against mycoplasma but has no activity against common Gram-positive and Gram-negative bacteria nor fungi. Has no hemolytic activity. The chain is Maximins-S type D from Bombina maxima (Giant fire-bellied toad).